Consider the following 65-residue polypeptide: Conopeptide Vt3.2 (65 aa).

The N-terminal stretch at 1 to 12 is a signal peptide; that stretch reads LLFPLATLQLNA. Residues 13 to 48 constitute a propeptide that is removed on maturation; it reads DQPVERNAENIQDLNPDKRFIFMPVPRRRGPYGSVH. A Serine amide modification is found at Ser64.

Belongs to the conotoxin M superfamily. In terms of assembly, homodimer; disulfide-linked. In terms of tissue distribution, expressed by the venom duct.

The protein localises to the secreted. The sequence is that of Conopeptide Vt3.2 from Conus planorbis (Planorbis cone).